Reading from the N-terminus, the 268-residue chain is Indole-3-glycerol phosphate synthase (268 aa).

The protein belongs to the TrpC family.

It carries out the reaction 1-(2-carboxyphenylamino)-1-deoxy-D-ribulose 5-phosphate + H(+) = (1S,2R)-1-C-(indol-3-yl)glycerol 3-phosphate + CO2 + H2O. It functions in the pathway amino-acid biosynthesis; L-tryptophan biosynthesis; L-tryptophan from chorismate: step 4/5. The polypeptide is Indole-3-glycerol phosphate synthase (trpC) (Acinetobacter baylyi (strain ATCC 33305 / BD413 / ADP1)).